The chain runs to 281 residues: uncharacterized protein (281 aa).

Residues 11-30 (PLGHKKEKPPPVSPPSPPPI) are disordered. Positions 20–30 (PPVSPPSPPPI) are enriched in pro residues. 7 helical membrane passes run 58–78 (TVVF…LIPW), 88–107 (TLPF…AYWL), 117–137 (MLVM…GLCF), 145–165 (AYVL…LMAW), 171–191 (LAIL…IAVQ), 196–216 (YQRI…IVLI), and 248–268 (VIMF…PNYA).

It belongs to the cytomegalovirus US12 family.

Its subcellular location is the membrane. This is an uncharacterized protein from Human cytomegalovirus (strain AD169) (HHV-5).